The primary structure comprises 416 residues: UDP-N-acetylglucosamine 1-carboxyvinyltransferase (416 aa).

22 to 23 (KN) serves as a coordination point for phosphoenolpyruvate. Arginine 92 is a binding site for UDP-N-acetyl-alpha-D-glucosamine. The active-site Proton donor is cysteine 116. Cysteine 116 is subject to 2-(S-cysteinyl)pyruvic acid O-phosphothioketal. UDP-N-acetyl-alpha-D-glucosamine is bound by residues 121–125 (RPVDQ), aspartate 304, and isoleucine 326.

This sequence belongs to the EPSP synthase family. MurA subfamily.

Its subcellular location is the cytoplasm. It catalyses the reaction phosphoenolpyruvate + UDP-N-acetyl-alpha-D-glucosamine = UDP-N-acetyl-3-O-(1-carboxyvinyl)-alpha-D-glucosamine + phosphate. The protein operates within cell wall biogenesis; peptidoglycan biosynthesis. Cell wall formation. Adds enolpyruvyl to UDP-N-acetylglucosamine. The protein is UDP-N-acetylglucosamine 1-carboxyvinyltransferase of Cupriavidus metallidurans (strain ATCC 43123 / DSM 2839 / NBRC 102507 / CH34) (Ralstonia metallidurans).